The chain runs to 509 residues: Maturase K (509 aa).

Belongs to the intron maturase 2 family. MatK subfamily.

It is found in the plastid. Its subcellular location is the chloroplast. Usually encoded in the trnK tRNA gene intron. Probably assists in splicing its own and other chloroplast group II introns. This chain is Maturase K, found in Thuja occidentalis (Northern white-cedar).